Consider the following 288-residue polypeptide: Small ribosomal subunit protein uS9m (288 aa).

Positions 269–288 (VERKKPGKKKARKMPTWVKR) are disordered.

The protein belongs to the universal ribosomal protein uS9 family.

It localises to the mitochondrion. In Candida glabrata (strain ATCC 2001 / BCRC 20586 / JCM 3761 / NBRC 0622 / NRRL Y-65 / CBS 138) (Yeast), this protein is Small ribosomal subunit protein uS9m (MRPS9).